The primary structure comprises 225 residues: Small ribosomal subunit protein uS3 (225 aa).

Residues 16 to 85 (VCEYVVKETE…TPQIEVKDVK (70 aa)) enclose the KH type-2 domain. The tract at residues 202–225 (EVGTESKADQTDVEGRETGNAEES) is disordered. Residues 205-225 (TESKADQTDVEGRETGNAEES) show a composition bias toward basic and acidic residues.

Belongs to the universal ribosomal protein uS3 family. As to quaternary structure, part of the 30S ribosomal subunit.

Functionally, binds the lower part of the 30S subunit head. The protein is Small ribosomal subunit protein uS3 of Thermoplasma acidophilum (strain ATCC 25905 / DSM 1728 / JCM 9062 / NBRC 15155 / AMRC-C165).